A 335-amino-acid chain; its full sequence is Transaldolase (335 aa).

Ser-2 carries the post-translational modification N-acetylserine. Lys-144 functions as the Schiff-base intermediate with substrate in the catalytic mechanism.

Belongs to the transaldolase family. Type 1 subfamily. As to quaternary structure, homodimer.

The enzyme catalyses D-sedoheptulose 7-phosphate + D-glyceraldehyde 3-phosphate = D-erythrose 4-phosphate + beta-D-fructose 6-phosphate. It functions in the pathway carbohydrate degradation; pentose phosphate pathway; D-glyceraldehyde 3-phosphate and beta-D-fructose 6-phosphate from D-ribose 5-phosphate and D-xylulose 5-phosphate (non-oxidative stage): step 2/3. In terms of biological role, transaldolase is important for the balance of metabolites in the pentose-phosphate pathway. The sequence is that of Transaldolase (TAL1) from Saccharomyces cerevisiae (strain ATCC 204508 / S288c) (Baker's yeast).